The following is a 381-amino-acid chain: Protein-glutamate methylesterase/protein-glutamine glutaminase 1 (381 aa).

Positions 14–132 (RVMLVDDSAV…DLAGGVDFKS (119 aa)) constitute a Response regulatory domain. At aspartate 65 the chain carries 4-aspartylphosphate. The segment at 143-173 (QARRAGARPARPGGPPATRPVIASTSPRTPV) is disordered. Low complexity predominate over residues 144–153 (ARRAGARPAR). Residues 188–381 (PEPPDIIAIG…PWIMKLAARR (194 aa)) enclose the CheB-type methylesterase domain. Catalysis depends on residues serine 199, histidine 227, and aspartate 323.

It belongs to the CheB family. Phosphorylated by CheA. Phosphorylation of the N-terminal regulatory domain activates the methylesterase activity.

The protein resides in the cytoplasm. It carries out the reaction [protein]-L-glutamate 5-O-methyl ester + H2O = L-glutamyl-[protein] + methanol + H(+). It catalyses the reaction L-glutaminyl-[protein] + H2O = L-glutamyl-[protein] + NH4(+). Its function is as follows. Involved in chemotaxis. Part of a chemotaxis signal transduction system that modulates chemotaxis in response to various stimuli. Catalyzes the demethylation of specific methylglutamate residues introduced into the chemoreceptors (methyl-accepting chemotaxis proteins or MCP) by CheR. Also mediates the irreversible deamidation of specific glutamine residues to glutamic acid. In Paramagnetospirillum magneticum (strain ATCC 700264 / AMB-1) (Magnetospirillum magneticum), this protein is Protein-glutamate methylesterase/protein-glutamine glutaminase 1.